Consider the following 652-residue polypeptide: Acetyl-coenzyme A synthetase (652 aa).

Residues 191 to 194 (RAGR), T311, and N335 each bind CoA. ATP contacts are provided by residues 387–389 (GEP), 411–416 (DTWWQT), D500, and R515. S523 serves as a coordination point for CoA. R526 serves as a coordination point for ATP. The Mg(2+) site is built by V537, H539, and I542. R584 contacts CoA. An N6-acetyllysine modification is found at K609.

The protein belongs to the ATP-dependent AMP-binding enzyme family. Requires Mg(2+) as cofactor. In terms of processing, acetylated. Deacetylation by the SIR2-homolog deacetylase activates the enzyme.

The enzyme catalyses acetate + ATP + CoA = acetyl-CoA + AMP + diphosphate. Functionally, catalyzes the conversion of acetate into acetyl-CoA (AcCoA), an essential intermediate at the junction of anabolic and catabolic pathways. Acs undergoes a two-step reaction. In the first half reaction, Acs combines acetate with ATP to form acetyl-adenylate (AcAMP) intermediate. In the second half reaction, it can then transfer the acetyl group from AcAMP to the sulfhydryl group of CoA, forming the product AcCoA. In terms of biological role, enables the cell to use acetate during aerobic growth to generate energy via the TCA cycle, and biosynthetic compounds via the glyoxylate shunt. Acetylates CheY, the response regulator involved in flagellar movement and chemotaxis. In Salmonella typhi, this protein is Acetyl-coenzyme A synthetase.